Here is a 548-residue protein sequence, read N- to C-terminus: Fumarate hydratase class I, aerobic (548 aa).

C105, C224, and C318 together coordinate [4Fe-4S] cluster.

Belongs to the class-I fumarase family. In terms of assembly, homodimer. [4Fe-4S] cluster is required as a cofactor.

It catalyses the reaction (S)-malate = fumarate + H2O. The enzyme catalyses oxaloacetate = enol-oxaloacetate. The protein operates within carbohydrate metabolism; tricarboxylic acid cycle; (S)-malate from fumarate: step 1/1. In terms of biological role, catalyzes the reversible hydration of fumarate to (S)-malate. Functions as an aerobic enzyme in the direction of malate formation as part of the citric acid cycle. Accounts for about 80% of the fumarase activity when the bacteria grow aerobically. To a lesser extent, also displays D-tartrate dehydratase activity in vitro, but is not able to convert (R)-malate, L-tartrate or meso-tartrate. Can also catalyze the isomerization of enol- to keto-oxaloacetate. This is Fumarate hydratase class I, aerobic from Escherichia coli O6:H1 (strain CFT073 / ATCC 700928 / UPEC).